Here is a 196-residue protein sequence, read N- to C-terminus: RNA-binding protein with multiple splicing 2 (196 aa).

One can recognise an RRM domain in the interval 20–97 (RTLFVSGLPI…QTLRLEFAKA (78 aa)). The interval 30 to 40 (DIKPRELYLLF) is important for homodimerization.

Homodimer. Expressed in developing heart, pronephros, retina and epiphysis. In adult, high expression in heart, moderate in kidney, undetectable in liver, lung and skeletal muscle.

The protein localises to the cytoplasm. It is found in the nucleus. Its subcellular location is the stress granule. In terms of biological role, RNA-binding protein involved in the regulation of smooth muscle cell differentiation and proliferation in the gastrointestinal system. Binds NOG mRNA, the major inhibitor of the bone morphogenetic protein (BMP) pathway. Mediates an increase of NOG mRNA levels, thereby contributing to the negative regulation of BMP signaling pathway and promoting reversible dedifferentiation and proliferation of smooth muscle cells. Acts as a pre-mRNA alternative splicing regulator. Mediates ACTN1 and FLNB alternative splicing. Likely binds to mRNA tandem CAC trinucleotide or CA dinucleotide motifs. The sequence is that of RNA-binding protein with multiple splicing 2 from Xenopus laevis (African clawed frog).